The sequence spans 180 residues: Putative pre-16S rRNA nuclease (180 aa).

Residues 1–12 show a composition bias toward basic and acidic residues; sequence MDAQERSERPDP. The tract at residues 1 to 23 is disordered; the sequence is MDAQERSERPDPATDPGRGRRLG.

This sequence belongs to the YqgF nuclease family.

It localises to the cytoplasm. Could be a nuclease involved in processing of the 5'-end of pre-16S rRNA. The polypeptide is Putative pre-16S rRNA nuclease (Nocardia farcinica (strain IFM 10152)).